Consider the following 155-residue polypeptide: Ribosomal RNA large subunit methyltransferase H (155 aa).

S-adenosyl-L-methionine is bound by residues Leu73, Gly104, and 123–128 (LSPLTL).

The protein belongs to the RNA methyltransferase RlmH family. In terms of assembly, homodimer.

It localises to the cytoplasm. The catalysed reaction is pseudouridine(1915) in 23S rRNA + S-adenosyl-L-methionine = N(3)-methylpseudouridine(1915) in 23S rRNA + S-adenosyl-L-homocysteine + H(+). Its function is as follows. Specifically methylates the pseudouridine at position 1915 (m3Psi1915) in 23S rRNA. The sequence is that of Ribosomal RNA large subunit methyltransferase H from Pseudomonas putida (strain W619).